The primary structure comprises 72 residues: Large ribosomal subunit protein bL28 (72 aa).

The protein belongs to the bacterial ribosomal protein bL28 family.

In Chlorobaculum tepidum (strain ATCC 49652 / DSM 12025 / NBRC 103806 / TLS) (Chlorobium tepidum), this protein is Large ribosomal subunit protein bL28.